A 597-amino-acid chain; its full sequence is Probable translation initiation factor IF-2 (597 aa).

In terms of domain architecture, tr-type G spans 10-226 (LRTPIVAVLG…LMGLSQRFMK (217 aa)). The segment at 19–26 (GHVDHGKT) is G1. 19–26 (GHVDHGKT) is a binding site for GTP. The G2 stretch occupies residues 44–48 (AITQH). Positions 81–84 (DTPG) are G3. Residues 81–85 (DTPGH) and 135–138 (NKVD) contribute to the GTP site. The tract at residues 135–138 (NKVD) is G4. The interval 203–205 (SAI) is G5.

It belongs to the TRAFAC class translation factor GTPase superfamily. Classic translation factor GTPase family. IF-2 subfamily.

In terms of biological role, function in general translation initiation by promoting the binding of the formylmethionine-tRNA to ribosomes. Seems to function along with eIF-2. This Halorubrum lacusprofundi (strain ATCC 49239 / DSM 5036 / JCM 8891 / ACAM 34) protein is Probable translation initiation factor IF-2.